Consider the following 455-residue polypeptide: MNNTLTTIILAAGKGTRMQSAKPKVLQILADKPLLAHVLDTCQSISVDKTIVVYGFGGDQVQQAMTDYSLTWVEQTEQLGTGHAVKVALDELPSTGKSLILYGDVPLVSAETLSRLKQANVQGMSMLTLTVDNPFGLGRIKRDEQGNITAIVEQKDASEQEQAIREINSGIYCVDNALLHQYLPNLSNDNAQQEYYLTDIVKMAVADGIAIAAIEPDYEFEIEGVNNRQQLAQLERKWQAKLVEDLQVQGVQFADPNRVDIRGEVSVGQDVFVDINVVFKGKVSLGNNVTIEAGCMIKDSQIGDNVHIKPYCVFDDAQVAQGATIGPFAHLRPQTVLEKNTRLGNFVEIKKSRIGEGSKVNHLSYVGDAQIGAGVNFGAGAITCNYDGVNKHQTIVGDNAFIGTNTSLVAPVTIGQTATIGAGSVITKNVEDNALAIGRGRQVQKDNYQRPEKKK.

Residues 1–228 (MNNTLTTIIL…EFEIEGVNNR (228 aa)) are pyrophosphorylase. UDP-N-acetyl-alpha-D-glucosamine-binding positions include 10–13 (LAAG), K24, Q75, 80–81 (GT), 102–104 (YGD), G138, E153, N168, and N226. D104 serves as a coordination point for Mg(2+). N226 serves as a coordination point for Mg(2+). The interval 229 to 249 (QQLAQLERKWQAKLVEDLQVQ) is linker. Positions 250–455 (GVQFADPNRV…DNYQRPEKKK (206 aa)) are N-acetyltransferase. R332 and K350 together coordinate UDP-N-acetyl-alpha-D-glucosamine. H362 (proton acceptor) is an active-site residue. UDP-N-acetyl-alpha-D-glucosamine is bound by residues Y365 and N376. Acetyl-CoA contacts are provided by residues A379, 385 to 386 (NY), A422, and R439.

The protein in the N-terminal section; belongs to the N-acetylglucosamine-1-phosphate uridyltransferase family. This sequence in the C-terminal section; belongs to the transferase hexapeptide repeat family. Homotrimer. It depends on Mg(2+) as a cofactor.

The protein resides in the cytoplasm. The catalysed reaction is alpha-D-glucosamine 1-phosphate + acetyl-CoA = N-acetyl-alpha-D-glucosamine 1-phosphate + CoA + H(+). The enzyme catalyses N-acetyl-alpha-D-glucosamine 1-phosphate + UTP + H(+) = UDP-N-acetyl-alpha-D-glucosamine + diphosphate. It functions in the pathway nucleotide-sugar biosynthesis; UDP-N-acetyl-alpha-D-glucosamine biosynthesis; N-acetyl-alpha-D-glucosamine 1-phosphate from alpha-D-glucosamine 6-phosphate (route II): step 2/2. The protein operates within nucleotide-sugar biosynthesis; UDP-N-acetyl-alpha-D-glucosamine biosynthesis; UDP-N-acetyl-alpha-D-glucosamine from N-acetyl-alpha-D-glucosamine 1-phosphate: step 1/1. Its pathway is bacterial outer membrane biogenesis; LPS lipid A biosynthesis. Its function is as follows. Catalyzes the last two sequential reactions in the de novo biosynthetic pathway for UDP-N-acetylglucosamine (UDP-GlcNAc). The C-terminal domain catalyzes the transfer of acetyl group from acetyl coenzyme A to glucosamine-1-phosphate (GlcN-1-P) to produce N-acetylglucosamine-1-phosphate (GlcNAc-1-P), which is converted into UDP-GlcNAc by the transfer of uridine 5-monophosphate (from uridine 5-triphosphate), a reaction catalyzed by the N-terminal domain. The sequence is that of Bifunctional protein GlmU from Psychrobacter sp. (strain PRwf-1).